The chain runs to 283 residues: Phosphatidylglycerol--prolipoprotein diacylglyceryl transferase (283 aa).

The next 4 helical transmembrane spans lie at 17-37, 56-76, 92-112, and 117-137; these read LAVRWYALSYILGFILFTFLG, FLTWGILGVILGGRLGYVLFY, WEGGMSFHGGFLGVVIAIWLF, and GIGFLKLMDTVAPLVPLGLAS. Position 139 (R139) interacts with a 1,2-diacyl-sn-glycero-3-phospho-(1'-sn-glycerol). 3 helical membrane-spanning segments follow: residues 194-214, 222-242, and 255-275; these read PSQLYQFALEGICLFAVVWLF, GQVASLFLGGYGIFRFIAEFA, and GLSMGQWLSVPMIVLGIVGFV.

The protein belongs to the Lgt family.

Its subcellular location is the cell inner membrane. The enzyme catalyses L-cysteinyl-[prolipoprotein] + a 1,2-diacyl-sn-glycero-3-phospho-(1'-sn-glycerol) = an S-1,2-diacyl-sn-glyceryl-L-cysteinyl-[prolipoprotein] + sn-glycerol 1-phosphate + H(+). It participates in protein modification; lipoprotein biosynthesis (diacylglyceryl transfer). In terms of biological role, catalyzes the transfer of the diacylglyceryl group from phosphatidylglycerol to the sulfhydryl group of the N-terminal cysteine of a prolipoprotein, the first step in the formation of mature lipoproteins. In Neisseria meningitidis serogroup C / serotype 2a (strain ATCC 700532 / DSM 15464 / FAM18), this protein is Phosphatidylglycerol--prolipoprotein diacylglyceryl transferase.